A 249-amino-acid chain; its full sequence is Fasciclin-like arabinogalactan protein 12 (249 aa).

The signal sequence occupies residues 1–24; the sequence is MEHSLIILLFTVLLLLTTTPGILS. Residues 37 to 181 form the FAS1 domain; the sequence is PTNVTKILEK…LAVYQVDKVL (145 aa). Residues Asn39, Asn71, Asn143, Asn152, and Asn159 are each glycosylated (N-linked (GlcNAc...) asparagine). The segment at 186–219 is disordered; that stretch reads VFDPRPPAPAPAPSVSKSKKKKDDSDSSSDDSPA. A lipid anchor (GPI-anchor amidated aspartate) is attached at Asp220. A propeptide spans 221 to 249 (removed in mature form); the sequence is ASFALRNVGSVCDAVSFCVMSVMLAWFYL.

Belongs to the fasciclin-like AGP family.

Its subcellular location is the cell membrane. May be a cell surface adhesion protein. In Arabidopsis thaliana (Mouse-ear cress), this protein is Fasciclin-like arabinogalactan protein 12 (FLA12).